Consider the following 529-residue polypeptide: T-complex protein 1 subunit beta (529 aa).

It belongs to the TCP-1 chaperonin family. Heterooligomeric complex of about 850 to 900 kDa that forms two stacked rings, 12 to 16 nm in diameter.

It is found in the cytoplasm. Functionally, molecular chaperone; assists the folding of proteins upon ATP hydrolysis. Known to play a role, in vitro, in the folding of actin and tubulin. The sequence is that of T-complex protein 1 subunit beta (cct-2) from Caenorhabditis elegans.